A 294-amino-acid chain; its full sequence is Survival motor neuron protein (294 aa).

Gly residues predominate over residues 1–12; that stretch reads MAMSSGGSGGGV. Residues 1–32 form a disordered region; that stretch reads MAMSSGGSGGGVPEQEDSVLFRRGTGQSDDSD. Alanine 2 is modified (N-acetylalanine). Serine 4, serine 5, and serine 8 each carry phosphoserine; by PKA. Residues 13-44 form a P1 (binding site for GEMIN2) region; that stretch reads PEQEDSVLFRRGTGQSDDSDIWDDTALIKAYD. Threonine 25 carries the phosphothreonine modification. Phosphoserine occurs at positions 28 and 31. A Glycyl lysine isopeptide (Lys-Gly) (interchain with G-Cter in SUMO2) cross-link involves residue lysine 51. Positions 58–88 are disordered; the sequence is DICETSGKPKTTPKRKPAKKNKSQKKNTAAP. Basic residues predominate over residues 68 to 82; sequence TTPKRKPAKKNKSQK. Threonine 69 carries the post-translational modification Phosphothreonine. A Phosphothreonine; by PKA modification is found at threonine 85. The region spanning 91 to 151 is the Tudor domain; it reads QWKVGDKCSA…LSPISEVANN (61 aa). Residues 97–209 form a required for interaction with RPP20/POP7 region; sequence KCSAIWSEDG…MPGPRLGPGK (113 aa). Residues 156 to 166 show a composition bias toward low complexity; that stretch reads AQENENESQVS. The disordered stretch occupies residues 156-222; it reads AQENENESQV…KFNGPPPPPP (67 aa). Residue serine 187 is modified to Phosphoserine; by PKA. Residues 194-204 show a composition bias toward pro residues; it reads LPPPPPMPGPR. A Glycyl lysine isopeptide (Lys-Gly) (interchain with G-Cter in SUMO2) cross-link involves residue lysine 209. The tract at residues 240–267 is P2 (binding site for SM B); it reads PPIIPPPPPICPDSLDDADALGSMLISW. A required for interaction with SYNCRIP region spans residues 279–294; it reads GFRQNQKEGRCSHSLN.

It belongs to the SMN family. Homooligomer; may form higher order homooligomers in the dimer to octamer range. Part of the core SMN complex that contains SMN1, GEMIN2/SIP1, DDX20/GEMIN3, GEMIN4, GEMIN5, GEMIN6, GEMIN7, GEMIN8 and STRAP/UNRIP. Part of the SMN-Sm complex that contains SMN1, GEMIN2/SIP1, DDX20/GEMIN3, GEMIN4, GEMIN5, GEMIN6, GEMIN7, GEMIN8, STRAP/UNRIP and the Sm proteins SNRPB, SNRPD1, SNRPD2, SNRPD3, SNRPE, SNRPF and SNRPG. Component of an import snRNP complex composed of KPNB1, RNUT1, SMN1 and ZNF259. Interacts with DDX20, FBL, NOLA1, RNUT1, SYNCRIP and with several spliceosomal snRNP core Sm proteins, including SNRPB, SNRPD1, SNRPD2, SNRPD3, SNRPE and ILF3. Interacts with GEMIN2; the interaction is direct. Interacts with GEMIN3; the interaction is direct. Interacts with GEMIN8; the interaction is direct. Interacts with SNRPB; the interaction is direct. Interacts (via Tudor domain) with SNRPD1 (via C-terminus); the interaction is direct. Interacts with SNRPD2; the interaction is direct. Interacts (via Tudor domain) with SNRPD3 (via C-terminus); the interaction is direct. Interacts with SNRPE; the interaction is direct. Interacts with OSTF1, LSM10, LSM11 and RPP20/POP7. Interacts (via C-terminal region) with ZPR1 (via C-terminal region). Interacts (via Tudor domain) with COIL. Interacts with SETX; recruits SETX to POLR2A. Interacts with POLR2A (via the C-terminal domain (CTD)). Interacts with PRMT5. Interacts with XRN2. Interacts (via C-terminus) with FMR1 (via C-terminus); the interaction is direct and occurs in a RNA-independent manner. Interacts (via Tudor domain) with SF3B2 ('Arg-508'-methylated form). Interacts with WRAP53/TCAB1. Interacts (via Tudor domain) with ELAVL4 in an RNA-independent manner; the interaction is required for localization of ELAVL4 to RNA granules. Interacts with FRG1.

The protein localises to the nucleus. The protein resides in the gem. It localises to the cajal body. It is found in the cytoplasm. Its subcellular location is the cytoplasmic granule. The protein localises to the perikaryon. The protein resides in the cell projection. It localises to the neuron projection. It is found in the axon. Its subcellular location is the myofibril. The protein localises to the sarcomere. The protein resides in the z line. In terms of biological role, the SMN complex catalyzes the assembly of small nuclear ribonucleoproteins (snRNPs), the building blocks of the spliceosome, and thereby plays an important role in the splicing of cellular pre-mRNAs. Most spliceosomal snRNPs contain a common set of Sm proteins SNRPB, SNRPD1, SNRPD2, SNRPD3, SNRPE, SNRPF and SNRPG that assemble in a heptameric protein ring on the Sm site of the small nuclear RNA to form the core snRNP (Sm core). In the cytosol, the Sm proteins SNRPD1, SNRPD2, SNRPE, SNRPF and SNRPG are trapped in an inactive 6S pICln-Sm complex by the chaperone CLNS1A that controls the assembly of the core snRNP. To assemble core snRNPs, the SMN complex accepts the trapped 5Sm proteins from CLNS1A forming an intermediate. Binding of snRNA inside 5Sm ultimately triggers eviction of the SMN complex, thereby allowing binding of SNRPD3 and SNRPB to complete assembly of the core snRNP. Within the SMN complex, SMN1 acts as a structural backbone and together with GEMIN2 it gathers the Sm complex subunits. Ensures the correct splicing of U12 intron-containing genes that may be important for normal motor and proprioceptive neurons development. Also required for resolving RNA-DNA hybrids created by RNA polymerase II, that form R-loop in transcription terminal regions, an important step in proper transcription termination. May also play a role in the metabolism of small nucleolar ribonucleoprotein (snoRNPs). The protein is Survival motor neuron protein (SMN1) of Macaca fascicularis (Crab-eating macaque).